Consider the following 409-residue polypeptide: Ligand-gated cation channel ZACN (409 aa).

The first 18 residues, 1–18, serve as a signal peptide directing secretion; it reads MAPRLLLLLLAFLRLGTT. Topologically, residues 19 to 233 are extracellular; that stretch reads GPLVQGRGFR…LRLQNTALKA (215 aa). Residues asparagine 55 and asparagine 99 are each glycosylated (N-linked (GlcNAc...) asparagine). An intrachain disulfide couples cysteine 157 to cysteine 171. The chain crosses the membrane as a helical span at residues 234–254; that stretch reads IIALLVPGEALLLADMCGGLL. The Cytoplasmic portion of the chain corresponds to 255–265; the sequence is PLRATERIAYK. A helical transmembrane segment spans residues 266–286; sequence VTLLLGYLVFHSSLVQALPSS. Residues 287–296 lie on the Extracellular side of the membrane; the sequence is SSCNPLLIYY. The chain crosses the membrane as a helical span at residues 297-317; sequence FTVLLLLLFISTMETVLLAAL. Residues 318-365 are Cytoplasmic-facing; sequence QARGHLSARSSPIPTPRGEQQDHGDLGPHPEEAPGVKESRSWAEAADH. Positions 325-354 are disordered; sequence ARSSPIPTPRGEQQDHGDLGPHPEEAPGVK. Positions 336 to 354 are enriched in basic and acidic residues; sequence EQQDHGDLGPHPEEAPGVK. The helical transmembrane segment at 366–386 threads the bilayer; sequence IFFLVYVVGVVCSQFFFIGFW. The Extracellular segment spans residues 387 to 409; that stretch reads MWATCKSDPAPGEAIPHGGQPRL.

The protein belongs to the ligand-gated ion channel (TC 1.A.9) family. Glycosylated.

It is found in the cell membrane. It carries out the reaction Na(+)(in) = Na(+)(out). The enzyme catalyses K(+)(in) = K(+)(out). Its function is as follows. Ligand-gated cation channel that allows the movement of sodium and potassium monoatomic cations across cell membranes when activated by zinc (Zn2+), copper (Cu2+), and changes in pH. Could also transport cesium. The sequence is that of Ligand-gated cation channel ZACN from Canis lupus familiaris (Dog).